The sequence spans 236 residues: MAVTISDVCAVVPAAGFGRRMQTECPKQYLSIGDKTILEHTVAALLANPRVTRVVIAISPGDARFAALPLANHPQITVVDGGTERADSVLAGIRAAGNVAWVLVHDAARPCLHPDDLARLLAISQTSTVGGILAAPVRDTMKRAEPGLNHIAHTVERVDLWHALTPQFFPRELLHDCLTRALNEGATITDEASALEYCGFHPELVEGRADNIKVTRPEDLQLAEFYLTRMTYQENA.

This sequence belongs to the IspD/TarI cytidylyltransferase family. IspD subfamily. Homodimer.

It catalyses the reaction 2-C-methyl-D-erythritol 4-phosphate + CTP + H(+) = 4-CDP-2-C-methyl-D-erythritol + diphosphate. The protein operates within isoprenoid biosynthesis; isopentenyl diphosphate biosynthesis via DXP pathway; isopentenyl diphosphate from 1-deoxy-D-xylulose 5-phosphate: step 2/6. In terms of biological role, catalyzes the formation of 4-diphosphocytidyl-2-C-methyl-D-erythritol from CTP and 2-C-methyl-D-erythritol 4-phosphate (MEP). This Enterobacter sp. (strain 638) protein is 2-C-methyl-D-erythritol 4-phosphate cytidylyltransferase.